We begin with the raw amino-acid sequence, 203 residues long: FMN-dependent NADH:quinone oxidoreductase (203 aa).

FMN contacts are provided by residues Ser-9, 15–17 (SVS), and 138–141 (SRGG).

It belongs to the azoreductase type 1 family. In terms of assembly, homodimer. The cofactor is FMN.

The catalysed reaction is 2 a quinone + NADH + H(+) = 2 a 1,4-benzosemiquinone + NAD(+). It catalyses the reaction N,N-dimethyl-1,4-phenylenediamine + anthranilate + 2 NAD(+) = 2-(4-dimethylaminophenyl)diazenylbenzoate + 2 NADH + 2 H(+). In terms of biological role, quinone reductase that provides resistance to thiol-specific stress caused by electrophilic quinones. Also exhibits azoreductase activity. Catalyzes the reductive cleavage of the azo bond in aromatic azo compounds to the corresponding amines. This chain is FMN-dependent NADH:quinone oxidoreductase, found in Methylorubrum populi (strain ATCC BAA-705 / NCIMB 13946 / BJ001) (Methylobacterium populi).